The following is a 1527-amino-acid chain: Peroxidasin (1527 aa).

The first 23 residues, 1 to 23 (MRFMLLMLQLLGLLLLLAGGVQS), serve as a signal peptide directing secretion. One can recognise an LRRNT domain in the interval 24-53 (VYCPAGCTCLERTVRCIRAKLSAVPKLPQD). 6 LRR repeats span residues 51–74 (PQDT…AFSG), 75–98 (LAQL…ALNG), 99–122 (LTAL…IFQR), 124–146 (PRLE…LFDN), 147–170 (LPRL…GFNR), and 172–196 (NNLK…LWRR). Ig-like C2-type domains are found at residues 236–322 (PQFL…QPVR), 365–453 (PHFT…ARIE), 458–545 (PEIL…ATIK), and 553–643 (PQLA…ALVT). 4 cysteine pairs are disulfide-bonded: cysteine 257–cysteine 307, cysteine 388–cysteine 437, cysteine 479–cysteine 529, and cysteine 574–cysteine 627. Asparagine 419 is a glycosylation site (N-linked (GlcNAc...) asparagine). 5 N-linked (GlcNAc...) asparagine glycosylation sites follow: asparagine 616, asparagine 673, asparagine 682, asparagine 731, and asparagine 767. A disulfide bridge links cysteine 768 with cysteine 784. Aspartate 862 serves as a coordination point for heme b. Histidine 863 acts as the Proton acceptor in catalysis. Ca(2+) is bound at residue aspartate 864. 2 disulfides stabilise this stretch: cysteine 882/cysteine 892 and cysteine 886/cysteine 909. Residues threonine 941, tyrosine 943, aspartate 945, and serine 947 each coordinate Ca(2+). An N-linked (GlcNAc...) asparagine glycan is attached at asparagine 962. Cysteine 994 and cysteine 1005 form a disulfide bridge. Residues glutamate 1015 and histidine 1109 each contribute to the heme b site. Asparagine 1120 and asparagine 1213 each carry an N-linked (GlcNAc...) asparagine glycan. Cystine bridges form between cysteine 1212-cysteine 1269 and cysteine 1310-cysteine 1336. Residues 1403–1441 (NEERVSGLEELIGSFQKELKKLHKKLRKLEDSCNSADSE) are a coiled coil. Residues 1463 to 1524 (SHCVDDKGTT…PPEACCPHCP (62 aa)) form the VWFC domain.

This sequence belongs to the peroxidase family. XPO subfamily. In terms of assembly, homotrimer; disulfide-linked. Requires Ca(2+) as cofactor. The cofactor is heme b. As to expression, expressed in hemocytes. Also expressed in the fat body and gastric caeca.

Its subcellular location is the secreted. It carries out the reaction (5R)-5-hydroxy-L-lysyl-[collagen] + L-methionyl-[collagen] + H2O2 = [collagen]-(5R)-5-hydroxy-L-lysyl-N-S-L-methionyl-[collagen] + 2 H2O + H(+). The catalysed reaction is bromide + H2O2 = hypobromite + H2O. The enzyme catalyses (5R)-5-hydroxy-L-lysyl-[collagen] + L-methionyl-[collagen] + hypobromite = [collagen]-(5R)-5-hydroxy-L-lysyl-N-S-L-methionyl-[collagen] + bromide + H2O + H(+). It catalyses the reaction L-lysyl-[collagen] + L-methionyl-[collagen] + H2O2 = [collagen]-L-lysyl-N-S-L-methionyl-[collagen] + 2 H2O + H(+). It carries out the reaction L-lysyl-[collagen] + L-methionyl-[collagen] + hypobromite = [collagen]-L-lysyl-N-S-L-methionyl-[collagen] + bromide + H2O + H(+). The catalysed reaction is L-tyrosyl-[protein] + bromide + H2O2 + H(+) = 3-bromo-L-tyrosyl-[protein] + 2 H2O. The enzyme catalyses hypobromite + L-tyrosyl-[protein] + H(+) = 3-bromo-L-tyrosyl-[protein] + H2O. Catalyzes the two-electron oxidation of bromide by hydrogen peroxide and generates hypobromite as a reactive intermediate which mediates the formation of sulfilimine cross-links between methionine and hydroxylysine residues within an uncross-linked collagen IV NC1 hexamer. Plays a role in extracellular matrix consolidation, phagocytosis and defense. In Drosophila melanogaster (Fruit fly), this protein is Peroxidasin.